A 411-amino-acid chain; its full sequence is Bifunctional protein GlmU (411 aa).

Residues 1–204 form a pyrophosphorylase region; that stretch reads MDAIILCAGK…IGKLHGVELN (204 aa). UTP is bound by residues 6–9, Gln-74, and Gly-79; that span reads LCAG. 4 residues coordinate N-acetyl-alpha-D-glucosamine 1-phosphate: Thr-80, Gly-130, Asn-142, and Asn-158. Residues 205-224 are linker; that stretch reads GYWNDIGHPWDVLSANSHFL. The tract at residues 225 to 411 is N-acetyltransferase; the sequence is NKIISKISGK…DELVITKKRN (187 aa). The active-site Proton acceptor is His-308. Acetyl-CoA is bound by residues Ala-384 and Lys-401.

The protein in the N-terminal section; belongs to the N-acetylglucosamine-1-phosphate uridyltransferase family. It in the C-terminal section; belongs to the transferase hexapeptide repeat family.

It carries out the reaction N-acetyl-alpha-D-glucosamine 1-phosphate + UTP + H(+) = UDP-N-acetyl-alpha-D-glucosamine + diphosphate. The enzyme catalyses alpha-D-glucosamine 1-phosphate + acetyl-CoA = N-acetyl-alpha-D-glucosamine 1-phosphate + CoA + H(+). It functions in the pathway nucleotide-sugar biosynthesis; UDP-N-acetyl-alpha-D-glucosamine biosynthesis; N-acetyl-alpha-D-glucosamine 1-phosphate from alpha-D-glucosamine 6-phosphate (route II): step 2/2. Its pathway is nucleotide-sugar biosynthesis; UDP-N-acetyl-alpha-D-glucosamine biosynthesis; UDP-N-acetyl-alpha-D-glucosamine from N-acetyl-alpha-D-glucosamine 1-phosphate: step 1/1. Catalyzes the last two sequential reactions in the de novo biosynthetic pathway for UDP-N-acetyl-glucosamine (UDP-GlcNAc). Responsible for the acetylation of GlcN-1-P to GlcNAc-1-P, and for the uridyl transfer from UTP to GlcNAc-1-P, to produce UDP-GlcNAc and pyrophosphate. This chain is Bifunctional protein GlmU, found in Methanococcus maripaludis (strain C5 / ATCC BAA-1333).